A 331-amino-acid chain; its full sequence is Glycerophosphodiester phosphodiesterase 1 (331 aa).

Over 1–3 the chain is Cytoplasmic; the sequence is MWL. The chain crosses the membrane as a helical span at residues 4 to 24; sequence WEDQGGLLGPFSFLLLVLLLV. Topologically, residues 25–247 are lumenal; the sequence is TRSPVNACLL…KPRYDTFWKH (223 aa). In terms of domain architecture, GP-PDE spans 65–331; it reads ISAIAHRGGS…SMVEDCEPHF (267 aa). Positions 97 and 99 each coordinate Mg(2+). Residue Asn168 is glycosylated (N-linked (GlcNAc...) asparagine). Asp174 provides a ligand contact to Mg(2+). N-linked (GlcNAc...) asparagine glycosylation is present at Asn198. The chain crosses the membrane as a helical span at residues 248-268; the sequence is FIFVMMDILLDWSMHNILWYL. Residues 269-331 lie on the Cytoplasmic side of the membrane; the sequence is CGISAFLMQK…SMVEDCEPHF (63 aa).

Belongs to the glycerophosphoryl diester phosphodiesterase family. As to quaternary structure, interacts with PRAF2. Interacts with RGS16. The cofactor is Mg(2+). N-glycosylated. Widely expressed.

It localises to the cell membrane. Its subcellular location is the cytoplasmic vesicle membrane. The catalysed reaction is sn-glycero-3-phospho-1D-myo-inositol + H2O = myo-inositol + sn-glycerol 3-phosphate + H(+). It catalyses the reaction 1-O-(1Z-octadecenyl)-sn-glycero-3-phospho-(N-5Z,8Z,11Z,14Z-eicosatetraenoyl)-ethanolamine + H2O = 1-O-(1Z-octadecenyl)-sn-glycero-3-phosphate + N-(5Z,8Z,11Z,14Z-eicosatetraenoyl)-ethanolamine + H(+). It carries out the reaction 1-O-(1Z-octadecenyl)-sn-glycero-3-phospho-(N-9Z-octadecenoyl)-ethanolamine + H2O = 1-O-(1Z-octadecenyl)-sn-glycero-3-phosphate + N-(9Z-octadecenoyl) ethanolamine + H(+). The enzyme catalyses 1-O-(1Z-octadecenyl)-sn-glycero-3-phospho-N-hexadecanoyl-ethanolamine + H2O = 1-O-(1Z-octadecenyl)-sn-glycero-3-phosphate + N-hexadecanoylethanolamine + H(+). The catalysed reaction is N-(4Z,7Z,10Z,13Z,16Z,19Z)-docosahexaenoyl-sn-glycero-3-phosphoethanolamine + H2O = N-(4Z,7Z,10Z,13Z,16Z,19Z)-docosahexaenoyl ethanolamine + sn-glycerol 3-phosphate + H(+). It catalyses the reaction N-eicosanoyl-sn-glycero-3-phosphoethanolamine + H2O = N-eicosanoyl ethanolamine + sn-glycerol 3-phosphate + H(+). It carries out the reaction N-hexadecanoyl-sn-glycero-3-phosphoethanolamine + H2O = N-hexadecanoylethanolamine + sn-glycerol 3-phosphate + H(+). The enzyme catalyses N-(9Z-octadecenoyl)-sn-glycero-3-phosphoethanolamine + H2O = N-(9Z-octadecenoyl) ethanolamine + sn-glycerol 3-phosphate + H(+). The catalysed reaction is N-(5Z,8Z,11Z,14Z-eicosatetraenoyl)-sn-glycero-3-phosphoethanolamine + H2O = N-(5Z,8Z,11Z,14Z-eicosatetraenoyl)-ethanolamine + sn-glycerol 3-phosphate + H(+). Inhibited by EDTA, calcium chloride, and zinc chloride. Enhanced by magnesium chloride. Glycerophosphodiester phosphodiesterase activity can be modulated by G-protein signaling pathways. Its function is as follows. Hydrolyzes the phosphodiester bond of glycerophosphodiesters such as glycerophosphoinositol (GroPIns) and glycerophosphoethanolamine (GroPEth), to yield a glycerol phosphate and an alcohol. Hydrolyzes glycerophospho-N-acylethanolamines to N-acylethanolamines in the brain and participates in bioactive N-acylethanolamine biosynthesis such as anandamide (an endocannabinoid), N-palmitoylethanolamine (an anti-inflammatory), and N-oleoylethanolamine (an anorexic). In addition, has a lysophospholipase D activity by hydrolyzing N-acyl-lysoplasmenylethanolamine (N-acyl-lysoPlsEt) to N-acylethanolamine. However lysophospholipase D activity is lower than glycerophosphodiester phosphodiesterase activity. Has little or no activity towards glycerophosphocholine. In Homo sapiens (Human), this protein is Glycerophosphodiester phosphodiesterase 1.